The primary structure comprises 329 residues: Pantothenate kinase (329 aa).

An ATP-binding site is contributed by 107 to 114 (GSVAVGKS).

It belongs to the prokaryotic pantothenate kinase family.

The protein resides in the cytoplasm. It carries out the reaction (R)-pantothenate + ATP = (R)-4'-phosphopantothenate + ADP + H(+). The protein operates within cofactor biosynthesis; coenzyme A biosynthesis; CoA from (R)-pantothenate: step 1/5. This chain is Pantothenate kinase, found in Streptomyces avermitilis (strain ATCC 31267 / DSM 46492 / JCM 5070 / NBRC 14893 / NCIMB 12804 / NRRL 8165 / MA-4680).